A 251-amino-acid polypeptide reads, in one-letter code: Triosephosphate isomerase (251 aa).

9–11 (NWK) contributes to the substrate binding site. His-95 (electrophile) is an active-site residue. Glu-167 acts as the Proton acceptor in catalysis. Substrate contacts are provided by residues Gly-173, Ser-213, and 234–235 (GG).

This sequence belongs to the triosephosphate isomerase family. In terms of assembly, homodimer.

The protein localises to the cytoplasm. The enzyme catalyses D-glyceraldehyde 3-phosphate = dihydroxyacetone phosphate. The protein operates within carbohydrate biosynthesis; gluconeogenesis. It functions in the pathway carbohydrate degradation; glycolysis; D-glyceraldehyde 3-phosphate from glycerone phosphate: step 1/1. Its function is as follows. Involved in the gluconeogenesis. Catalyzes stereospecifically the conversion of dihydroxyacetone phosphate (DHAP) to D-glyceraldehyde-3-phosphate (G3P). This Latilactobacillus sakei subsp. sakei (strain 23K) (Lactobacillus sakei subsp. sakei) protein is Triosephosphate isomerase.